Here is a 212-residue protein sequence, read N- to C-terminus: Thymidine kinase (212 aa).

ATP is bound by residues 16–23 and 99–102; these read GPMFSGKS and DEAQ. The Proton acceptor role is filled by Glu-100.

This sequence belongs to the thymidine kinase family. Homotetramer.

The protein resides in the cytoplasm. It carries out the reaction thymidine + ATP = dTMP + ADP + H(+). This Deinococcus radiodurans (strain ATCC 13939 / DSM 20539 / JCM 16871 / CCUG 27074 / LMG 4051 / NBRC 15346 / NCIMB 9279 / VKM B-1422 / R1) protein is Thymidine kinase.